A 208-amino-acid chain; its full sequence is UPF0637 protein lp_2332 (208 aa).

This sequence belongs to the UPF0637 family.

The protein is UPF0637 protein lp_2332 of Lactiplantibacillus plantarum (strain ATCC BAA-793 / NCIMB 8826 / WCFS1) (Lactobacillus plantarum).